Consider the following 375-residue polypeptide: Putative fimbrium tip subunit Fim1C (375 aa).

The first 16 residues, 1–16 (MKLLANIFLSGLAILA), serve as a signal peptide directing secretion. Cys17 is lipidated: N-palmitoyl cysteine. Cys17 is lipidated: S-diacylglycerol cysteine. Residues 17–47 (CVSCSKDEDPVLPLEGAKLSVAVKASGTATK) constitute a propeptide that is removed on maturation.

The protein belongs to the bacteroidetes fimbrillin superfamily. FimA/Mfa1 family. In terms of assembly, may be part of the fimbrial tip.

Its subcellular location is the fimbrium. It localises to the cell outer membrane. Probably a component of the fimbrium tip. Fimbriae are filamentous appendages on the cell surface that mediate cell adhesion and biofilm formation. The protein is Putative fimbrium tip subunit Fim1C of Parabacteroides distasonis (strain ATCC 8503 / DSM 20701 / CIP 104284 / JCM 5825 / NCTC 11152).